Here is a 450-residue protein sequence, read N- to C-terminus: uncharacterized protein (450 aa).

The next 12 helical transmembrane spans lie at 10–30, 53–73, 95–115, 120–140, 148–168, 199–219, 242–262, 267–287, 302–322, 343–363, 378–398, and 428–448; these read IIVL…LVIA, LGGG…AIAI, TAGN…LFAI, LLPV…SIFN, AVAC…PVGF, LAML…IFIT, IANI…ATFA, TSST…CGIF, LMAM…VINA, IAAL…GSSF, LSFG…AALG, and VVPT…IAAM.

Its subcellular location is the cell membrane. This is an uncharacterized protein from Haemophilus influenzae (strain ATCC 51907 / DSM 11121 / KW20 / Rd).